A 222-amino-acid polypeptide reads, in one-letter code: Cell division protein FtsQ (222 aa).

The Cytoplasmic segment spans residues 1–5; that stretch reads MNKKV. Residues 6–26 traverse the membrane as a helical segment; the sequence is IAIVVGVVVVLVAILGVVAWF. The Extracellular portion of the chain corresponds to 27–222; that stretch reads VPILKVGNIE…ISSPSMVTVR (196 aa). The 69-residue stretch at 30–98 folds into the POTRA domain; sequence LKVGNIEVTG…STITVELTER (69 aa).

Belongs to the FtsQ/DivIB family. FtsQ subfamily.

It localises to the cell membrane. Functionally, essential cell division protein. In Corynebacterium glutamicum (strain ATCC 13032 / DSM 20300 / JCM 1318 / BCRC 11384 / CCUG 27702 / LMG 3730 / NBRC 12168 / NCIMB 10025 / NRRL B-2784 / 534), this protein is Cell division protein FtsQ.